Here is a 156-residue protein sequence, read N- to C-terminus: Myosin regulatory light chain B, smooth adductor muscle (156 aa).

Ala1 is subject to Blocked amino end (Ala). EF-hand domains follow at residues 15-50 (KQIQEMKEAFTMIDQNRDGFIDINDLKEMFSSLGRT) and 84-119 (DTEETLRNAFAMFDELDTKKLNIEYIKDLLENMGDN). Ca(2+) contacts are provided by Asp28, Asn30, Asp32, and Asp39.

Its function is as follows. In molluscan muscle, calcium regulation is associated with myosin rather than with actin. Muscle myosin contains two types of light chains: the catalytic light chain, essential for ATPase activity, and the regulatory light chain, a calcium-binding protein responsible for Ca(2+) dependent binding and Ca(2+) dependent Mg-ATPase activity. This Mizuhopecten yessoensis (Japanese scallop) protein is Myosin regulatory light chain B, smooth adductor muscle.